We begin with the raw amino-acid sequence, 185 residues long: MSLEEVLKDIERDKEEKKKEIADAASRETAKIEKEREEKIQILQREYENRMREEGSRLYNSIIDKANVEARNIVRMRVQEILDQYGAKADELIKNLAKTKEYDDVLKKMIEVSRKALGPDCIVKVNTADKGRISDGNIKFEDIDPYGGVLATSRDGKIELDLRISSIRRDILERFKVRLYSMIED.

This sequence belongs to the V-ATPase E subunit family. In terms of assembly, has multiple subunits with at least A(3), B(3), C, D, E, F, H, I and proteolipid K(x).

The protein resides in the cell membrane. Its function is as follows. Component of the A-type ATP synthase that produces ATP from ADP in the presence of a proton gradient across the membrane. The sequence is that of A-type ATP synthase subunit E from Thermoplasma acidophilum (strain ATCC 25905 / DSM 1728 / JCM 9062 / NBRC 15155 / AMRC-C165).